The chain runs to 1368 residues: DNA-directed RNA polymerase subunit beta' (1368 aa).

Residues Met1 to Thr38 form a disordered region. The span at Pro7–Ala18 shows a compositional bias: basic residues. A compositionally biased stretch (low complexity) spans Ser19 to Ser29. Zn(2+)-binding residues include Cys250, Cys318, Cys325, and Cys328. The tract at residues Ala1340 to Ser1368 is disordered. Positions Gly1353–Ser1368 are enriched in low complexity.

It belongs to the RNA polymerase beta' chain family. RpoC2 subfamily. In cyanobacteria the RNAP catalytic core is composed of 2 alpha, 1 beta, 1 beta', 1 gamma and 1 omega subunit. When a sigma factor is associated with the core the holoenzyme is formed, which can initiate transcription. Requires Zn(2+) as cofactor.

It carries out the reaction RNA(n) + a ribonucleoside 5'-triphosphate = RNA(n+1) + diphosphate. In terms of biological role, DNA-dependent RNA polymerase catalyzes the transcription of DNA into RNA using the four ribonucleoside triphosphates as substrates. The polypeptide is DNA-directed RNA polymerase subunit beta' (Synechococcus sp. (strain RCC307)).